A 527-amino-acid polypeptide reads, in one-letter code: Glutamate--cysteine ligase (527 aa).

It belongs to the glutamate--cysteine ligase type 1 family. Type 1 subfamily.

The catalysed reaction is L-cysteine + L-glutamate + ATP = gamma-L-glutamyl-L-cysteine + ADP + phosphate + H(+). Its pathway is sulfur metabolism; glutathione biosynthesis; glutathione from L-cysteine and L-glutamate: step 1/2. This Pseudomonas aeruginosa (strain UCBPP-PA14) protein is Glutamate--cysteine ligase.